A 713-amino-acid polypeptide reads, in one-letter code: Phosphoribosylformylglycinamidine synthase subunit PurL (713 aa).

Histidine 32 is a catalytic residue. Residue tyrosine 35 coordinates ATP. Glutamate 76 contributes to the Mg(2+) binding site. Residues 77 to 80 (SHNH) and arginine 99 contribute to the substrate site. The active-site Proton acceptor is the histidine 78. Aspartate 100 contacts Mg(2+). Residue glutamine 224 participates in substrate binding. Aspartate 252 contributes to the Mg(2+) binding site. 296–298 (ESQ) is a binding site for substrate. Aspartate 471 and glycine 508 together coordinate ATP. A Mg(2+)-binding site is contributed by asparagine 509. Serine 511 lines the substrate pocket.

Belongs to the FGAMS family. Monomer. Part of the FGAM synthase complex composed of 1 PurL, 1 PurQ and 2 PurS subunits.

The protein resides in the cytoplasm. The catalysed reaction is N(2)-formyl-N(1)-(5-phospho-beta-D-ribosyl)glycinamide + L-glutamine + ATP + H2O = 2-formamido-N(1)-(5-O-phospho-beta-D-ribosyl)acetamidine + L-glutamate + ADP + phosphate + H(+). The protein operates within purine metabolism; IMP biosynthesis via de novo pathway; 5-amino-1-(5-phospho-D-ribosyl)imidazole from N(2)-formyl-N(1)-(5-phospho-D-ribosyl)glycinamide: step 1/2. Part of the phosphoribosylformylglycinamidine synthase complex involved in the purines biosynthetic pathway. Catalyzes the ATP-dependent conversion of formylglycinamide ribonucleotide (FGAR) and glutamine to yield formylglycinamidine ribonucleotide (FGAM) and glutamate. The FGAM synthase complex is composed of three subunits. PurQ produces an ammonia molecule by converting glutamine to glutamate. PurL transfers the ammonia molecule to FGAR to form FGAM in an ATP-dependent manner. PurS interacts with PurQ and PurL and is thought to assist in the transfer of the ammonia molecule from PurQ to PurL. The protein is Phosphoribosylformylglycinamidine synthase subunit PurL of Thermococcus sibiricus (strain DSM 12597 / MM 739).